Consider the following 313-residue polypeptide: DNA-directed RNA polymerase subunit alpha (313 aa).

An alpha N-terminal domain (alpha-NTD) region spans residues 1 to 229; the sequence is MNSSNLLMEC…NLFKSIGEQK (229 aa). Positions 243–313 are alpha C-terminal domain (alpha-CTD); sequence IKPIDPYTHI…LKNKLGIVLK (71 aa).

The protein belongs to the RNA polymerase alpha chain family. As to quaternary structure, in plastids the minimal PEP RNA polymerase catalytic core is composed of four subunits: alpha, beta, beta', and beta''. When a (nuclear-encoded) sigma factor is associated with the core the holoenzyme is formed, which can initiate transcription.

It is found in the plastid. The protein resides in the chloroplast. The catalysed reaction is RNA(n) + a ribonucleoside 5'-triphosphate = RNA(n+1) + diphosphate. In terms of biological role, DNA-dependent RNA polymerase catalyzes the transcription of DNA into RNA using the four ribonucleoside triphosphates as substrates. The chain is DNA-directed RNA polymerase subunit alpha from Thalassiosira pseudonana (Marine diatom).